We begin with the raw amino-acid sequence, 140 residues long: MLDINQIKEIIPHRYPFLLVDRILSVEDGRKAVGLKNVSANEPYFQGHFPGYPVMPGVLIIEAMAQVGAVAVLRLPEFAGKMAFFAGIDRARFRRQVVPGDQLRIEVELQKLRGTVGKARGAAYVGQELAAEAELMFAVR.

His48 is a catalytic residue.

The protein belongs to the thioester dehydratase family. FabZ subfamily.

Its subcellular location is the cytoplasm. The catalysed reaction is a (3R)-hydroxyacyl-[ACP] = a (2E)-enoyl-[ACP] + H2O. Functionally, involved in unsaturated fatty acids biosynthesis. Catalyzes the dehydration of short chain beta-hydroxyacyl-ACPs and long chain saturated and unsaturated beta-hydroxyacyl-ACPs. The sequence is that of 3-hydroxyacyl-[acyl-carrier-protein] dehydratase FabZ from Pelotomaculum thermopropionicum (strain DSM 13744 / JCM 10971 / SI).